A 762-amino-acid polypeptide reads, in one-letter code: Semaphorin-4A (762 aa).

Positions 1-32 (MALPALGLDSWSFLGLFLFQLLLLFLPPATTA) are cleaved as a signal peptide. At 33 to 684 (GREGQGPTPR…LAAPKSYWPH (652 aa)) the chain is on the extracellular side. In terms of domain architecture, Sema spans 37–495 (QGPTPRVKYH…FSGGIWKVPR (459 aa)). A disulfide bridge connects residues Cys-114 and Cys-125. Residues Asn-121 and Asn-136 are each glycosylated (N-linked (GlcNAc...) asparagine). 3 cysteine pairs are disulfide-bonded: Cys-143-Cys-152, Cys-270-Cys-380, and Cys-294-Cys-340. N-linked (GlcNAc...) asparagine glycans are attached at residues Asn-314 and Asn-497. The 48-residue stretch at 497-544 (NCSVYESCMDCVLARDPHCAWDPESQTCRLLPTPILKSWKQDMQQGNP) folds into the PSI domain. 2 disulfide bridges follow: Cys-498–Cys-515 and Cys-507–Cys-524. Residues 574-632 (NSILELPCPQSSALASYHWSHGVEAIPEAPSTVYNGSLLLLLRDGAGGLYQCWATENDF) form the Ig-like C2-type domain. An N-linked (GlcNAc...) asparagine glycan is attached at Asn-608. The helical transmembrane segment at 685–705 (FLTVTVLLALVLSGALVTFLV) threads the bilayer. Topologically, residues 706–762 (SPLGALRARGKVQGCGTLPSREKAPLSSEQCLQPSKEGRTSASDMDADNNLQGTEVA) are cytoplasmic. The segment at 722-762 (TLPSREKAPLSSEQCLQPSKEGRTSASDMDADNNLQGTEVA) is disordered.

This sequence belongs to the semaphorin family. Interacts with PLXNB1, PLXNB2, PLXNB3, PLXND1 and TIMD2.

It localises to the cell membrane. Its function is as follows. Cell surface receptor for PLXNB1, PLXNB2, PLXNB3 and PLXND1 that plays an important role in cell-cell signaling. Regulates glutamatergic and GABAergic synapse development. Promotes the development of inhibitory synapses in a PLXNB1-dependent manner and promotes the development of excitatory synapses in a PLXNB2-dependent manner. Plays a role in priming antigen-specific T-cells, promotes differentiation of Th1 T-helper cells, and thereby contributes to adaptive immunity. Promotes phosphorylation of TIMD2. Inhibits angiogenesis. Promotes axon growth cone collapse. Inhibits axonal extension by providing local signals to specify territories inaccessible for growing axons. This chain is Semaphorin-4A (SEMA4A), found in Bos taurus (Bovine).